The following is a 371-amino-acid chain: D-alanine--D-alanine ligase (371 aa).

Residues 154–361 form the ATP-grasp domain; sequence KKLLVAEGLP…YPTLLAAMVD (208 aa). Position 182-237 (182-237) interacts with ATP; sequence RERLGLPVFVKPARGGSSIGVSRVSDWAELPAAIEAARRHDPKVIVEAGIAGRELE. D316, E328, and N330 together coordinate Mg(2+).

This sequence belongs to the D-alanine--D-alanine ligase family. It depends on Mg(2+) as a cofactor. The cofactor is Mn(2+).

Its subcellular location is the cytoplasm. The enzyme catalyses 2 D-alanine + ATP = D-alanyl-D-alanine + ADP + phosphate + H(+). It participates in cell wall biogenesis; peptidoglycan biosynthesis. Cell wall formation. The polypeptide is D-alanine--D-alanine ligase (Mycobacterium sp. (strain JLS)).